The chain runs to 612 residues: MVSFSSCLRALALGSSVLAVQPVLRQATGLDTWLSTEANFSRQAILNNIGADGQSAQGASPGVVIASPSKSDPDYFYTWTRDSGLVMKTLVDLFRGGDADLLPIIEEFISSQARIQGISNPSGALSSGGLGEPKFNVDETAFTGAWGRPQRDGPALRATAMISFGEWLVENGHTSIATDLVWPVVRNDLSYVAQYWSQSGFDLWEEVQGTSFFTVAVSHRALVEGSSFAKTVGSSCPYCDSQAPQVRCYLQSFWTGSYIQANFGGGRSGKDINTVLGSIHTFDPQATCDDATFQPCSARALANHKVVTDSFRSIYAINSGRAENQAVAVGRYPEDSYYNGNPWFLTTLAAAEQLYDALYQWDKIGSLAITDVSLPFFKALYSSAATGTYASSTTVYKDIVSAVKAYADGYVQIVQTYAASTGSMAEQYTKTDGSQTSARDLTWSYAALLTANNRRNAVVPAPWGETAATSIPSACSTTSASGTYSSVVITSWPTISGYPGAPDSPCQVPTTVSVTFAVKATTVYGESIKIVGSISQLGSWNPSSATALNADSYTTDNPLWTGTINLPAGQSFEYKFIRVQNGAVTWESDPNRKYTVPSTCGVKSAVQSDVWR.

Residues 1 to 19 form the signal peptide; sequence MVSFSSCLRALALGSSVLA. Positions 20–25 are excised as a propeptide; sequence VQPVLR. N-linked (GlcNAc...) asparagine glycosylation occurs at Asn39. Trp146 is a binding site for substrate. The Proton acceptor role is filled by Asp202. The active-site Proton donor is the Glu205. Cystine bridges form between Cys236/Cys239, Cys248/Cys475, and Cys288/Cys296. The region spanning 506–612 is the CBM20 domain; it reads CQVPTTVSVT…KSAVQSDVWR (107 aa).

Belongs to the glycosyl hydrolase 15 family.

The enzyme catalyses Hydrolysis of terminal (1-&gt;4)-linked alpha-D-glucose residues successively from non-reducing ends of the chains with release of beta-D-glucose.. This is Glucoamylase (glaA) from Aspergillus oryzae (strain ATCC 42149 / RIB 40) (Yellow koji mold).